A 266-amino-acid polypeptide reads, in one-letter code: Thiazole synthase (266 aa).

K110 serves as the catalytic Schiff-base intermediate with DXP. 1-deoxy-D-xylulose 5-phosphate is bound by residues G171, 197 to 198 (AG), and 219 to 220 (AT).

It belongs to the ThiG family. As to quaternary structure, homotetramer. Forms heterodimers with either ThiH or ThiS.

The protein resides in the cytoplasm. The enzyme catalyses [ThiS sulfur-carrier protein]-C-terminal-Gly-aminoethanethioate + 2-iminoacetate + 1-deoxy-D-xylulose 5-phosphate = [ThiS sulfur-carrier protein]-C-terminal Gly-Gly + 2-[(2R,5Z)-2-carboxy-4-methylthiazol-5(2H)-ylidene]ethyl phosphate + 2 H2O + H(+). The protein operates within cofactor biosynthesis; thiamine diphosphate biosynthesis. Catalyzes the rearrangement of 1-deoxy-D-xylulose 5-phosphate (DXP) to produce the thiazole phosphate moiety of thiamine. Sulfur is provided by the thiocarboxylate moiety of the carrier protein ThiS. In vitro, sulfur can be provided by H(2)S. The protein is Thiazole synthase of Thermobifida fusca (strain YX).